Consider the following 419-residue polypeptide: MHHLRALVGVGLAGLAAGVPLTDKISVKPRQAPGAQNVVYWGQNGGGTIENNDLAAYCQPNSGIDVLVLAFLYQFGNGGNIPSGTIGQSCYISTSGQGQNCEALTAAIHTCQSAGVKIILSLGGATSSYSLQTQAQAEQIGQYLWDSYGNSGNKTVQRPFGSNFVNGFDFDIEVNGGSSQYYQYMIAKLRSNFASDKSNTYLITGAPQCPIPEPNMGVIISNSVFDHLYVQFYNNNNYTVPCALGINGNAPFNYNNWTSFIADTPSAGAKIFIGVPASPLASTGTPSGAQYYAAPDQLAAIVGEYRSDAHFGGIMMWSAGFSDANVNNGCTYAQQAKSILVNGAPCASSGPPSSTPATAPAPTATTMPSSTSVSSPAASPTGGTVPQWGQCGGEGYSGPTQCVAPYQCVKQGDWWSSCR.

The signal sequence occupies residues 1–18 (MHHLRALVGVGLAGLAAG). A GH18 domain is found at 35–343 (AQNVVYWGQN…QQAKSILVNG (309 aa)). Residue asparagine 153 is glycosylated (N-linked (GlcNAc...) asparagine). Residue glutamate 173 is the Proton donor of the active site. N-linked (GlcNAc...) asparagine glycosylation is found at asparagine 237 and asparagine 256. Over residues 350–381 (GPPSSTPATAPAPTATTMPSSTSVSSPAASPT) the composition is skewed to low complexity. The interval 350 to 386 (GPPSSTPATAPAPTATTMPSSTSVSSPAASPTGGTVP) is disordered. The 37-residue stretch at 383–419 (GTVPQWGQCGGEGYSGPTQCVAPYQCVKQGDWWSSCR) folds into the CBM1 domain.

The protein belongs to the glycosyl hydrolase 18 family. Chitinase class III subfamily.

The protein localises to the secreted. It catalyses the reaction Random endo-hydrolysis of N-acetyl-beta-D-glucosaminide (1-&gt;4)-beta-linkages in chitin and chitodextrins.. Secreted chitinase involved in the degradation of chitin, a component of the cell walls of fungi and exoskeletal elements of some animals (including worms and arthropods). Participates in the infection process and directly acts in the penetration process of the host cuticle. This chain is Endochitinase 2 (chi2), found in Metarhizium robertsii (strain ARSEF 23 / ATCC MYA-3075) (Metarhizium anisopliae (strain ARSEF 23)).